The sequence spans 48 residues: Large ribosomal subunit protein bL32 (48 aa).

Over residues 1 to 20 (MAVPKRRVSKTRAAKRRTHY) the composition is skewed to basic residues. Positions 1–48 (MAVPKRRVSKTRAAKRRTHYKVSLPIPVKDKDGSWKLPHRINTKTGEY) are disordered.

It belongs to the bacterial ribosomal protein bL32 family.

In Campylobacter hominis (strain ATCC BAA-381 / DSM 21671 / CCUG 45161 / LMG 19568 / NCTC 13146 / CH001A), this protein is Large ribosomal subunit protein bL32.